The primary structure comprises 223 residues: Transcriptional regulator HMO1 (223 aa).

2 disordered regions span residues 69-89 (IEAT…APKK) and 165-223 (DGSA…HGSP). The segment covering 70 to 86 (EATESKKKRKQEKDPNA) has biased composition (basic and acidic residues). Residues 87-160 (PKKPLTMFFQ…IYNIEKKKYE (74 aa)) constitute a DNA-binding region (HMG box). The span at 204–223 (KKKKKTEKKEKKKKSGHGSP) shows a compositional bias: basic residues.

Its subcellular location is the nucleus. Its function is as follows. Transcription factor that binds upstream of hexose and ergosterol metabolism, as well as cell cycle genes. Activates pseudohyphal growth. This chain is Transcriptional regulator HMO1 (HMO1), found in Candida albicans (strain SC5314 / ATCC MYA-2876) (Yeast).